Reading from the N-terminus, the 387-residue chain is Galanin receptor type 2 (387 aa).

Topologically, residues 1 to 28 (MNVSGCPGAGNASQAGGGGGWHPEAVIV) are extracellular. Residues asparagine 2 and asparagine 11 are each glycosylated (N-linked (GlcNAc...) asparagine). Residues 29-49 (PLLFALIFLVGTVGNTLVLAV) form a helical membrane-spanning segment. The Cytoplasmic portion of the chain corresponds to 50–60 (LLRGGQAVSTT). The chain crosses the membrane as a helical span at residues 61–81 (NLFILNLGVADLCFILCCVPF). The Extracellular portion of the chain corresponds to 82–99 (QATIYTLDGWVFGSLLCK). Cysteine 98 and cysteine 175 are joined by a disulfide. A helical transmembrane segment spans residues 100-121 (AVHFLIFLTMHASSFTLAAVSL). Over 122–141 (DRYLAIRYPLHSRELRTPRN) the chain is Cytoplasmic. The chain crosses the membrane as a helical span at residues 142–162 (ALAAIGLIWGLSLLFSGPYLS). Over 163-187 (YYRQSQLANLTVCHPAWSAPRRRAM) the chain is Extracellular. The helical transmembrane segment at 188 to 208 (DICTFVFSYLLPVLVLGLTYA) threads the bilayer. The Cytoplasmic segment spans residues 209 to 237 (RTLRYLWRAVDPVAAGSGARRAKRKVTRM). Residues 238 to 258 (ILIVAALFCLCWMPHHALILC) traverse the membrane as a helical segment. At 259-260 (VW) the chain is on the extracellular side. A helical membrane pass occupies residues 261–281 (FGQFPLTRATYALRILSHLVS). At 282–387 (YANSCVNPIV…GDSILTVDVA (106 aa)) the chain is on the cytoplasmic side.

Belongs to the G-protein coupled receptor 1 family. In terms of tissue distribution, expressed abundantly within the central nervous system in both hypothalamus and hippocampus. In peripheral tissues, the strongest expression was observed in heart, kidney, liver, and small intestine.

The protein resides in the cell membrane. Receptor for the hormone galanin and GALP. Receptor for the hormone spexin-1. The activity of this receptor is mediated by G proteins that activate the phospholipase C/protein kinase C pathway (via G(q)) and that inhibit adenylyl cyclase (via G(i)). This chain is Galanin receptor type 2 (GALR2), found in Homo sapiens (Human).